We begin with the raw amino-acid sequence, 260 residues long: Snake venom serine protease homolog 1 (260 aa).

The first 18 residues, 1 to 18 (MVLIRVLANLLILQLSYA), serve as a signal peptide directing secretion. Residues 19–24 (QKSSEL) constitute a propeptide that is removed on maturation. Residues 25 to 251 (IIGGDECNIN…HLDWIKSIIA (227 aa)) form the Peptidase S1 domain. Cystine bridges form between cysteine 31/cysteine 165, cysteine 52/cysteine 68, cysteine 100/cysteine 258, cysteine 144/cysteine 212, cysteine 176/cysteine 191, and cysteine 202/cysteine 227. N-linked (GlcNAc...) asparagine glycans are attached at residues asparagine 83, asparagine 123, and asparagine 124.

The protein belongs to the peptidase S1 family. Snake venom subfamily. Expressed by the venom gland.

It localises to the secreted. Its function is as follows. Snake venom serine protease homolog that may act in the hemostasis system of the prey. The polypeptide is Snake venom serine protease homolog 1 (Trimeresurus stejnegeri (Chinese green tree viper)).